Here is a 207-residue protein sequence, read N- to C-terminus: Acyl-homoserine-lactone synthase (207 aa).

This sequence belongs to the autoinducer synthase family.

The catalysed reaction is a fatty acyl-[ACP] + S-adenosyl-L-methionine = an N-acyl-L-homoserine lactone + S-methyl-5'-thioadenosine + holo-[ACP] + H(+). Functionally, required for the synthesis of N-butanoyl-L-homoserine lactone (BHL), an autoinducer molecule which binds to AhyR. In Aeromonas hydrophila, this protein is Acyl-homoserine-lactone synthase (ahyI).